The primary structure comprises 402 residues: 2,3-bisphosphoglycerate-independent phosphoglycerate mutase (402 aa).

The interval S155 to P174 is disordered. Residues S160 to P174 show a composition bias toward basic and acidic residues.

This sequence belongs to the BPG-independent phosphoglycerate mutase family. A-PGAM subfamily.

The catalysed reaction is (2R)-2-phosphoglycerate = (2R)-3-phosphoglycerate. It functions in the pathway carbohydrate degradation; glycolysis; pyruvate from D-glyceraldehyde 3-phosphate: step 3/5. Its function is as follows. Catalyzes the interconversion of 2-phosphoglycerate and 3-phosphoglycerate. This is 2,3-bisphosphoglycerate-independent phosphoglycerate mutase from Picrophilus torridus (strain ATCC 700027 / DSM 9790 / JCM 10055 / NBRC 100828 / KAW 2/3).